The sequence spans 187 residues: Probable chorismate pyruvate-lyase (187 aa).

Residues arginine 81, leucine 119, and glutamate 178 each coordinate substrate.

The protein belongs to the UbiC family.

Its subcellular location is the cytoplasm. It catalyses the reaction chorismate = 4-hydroxybenzoate + pyruvate. It functions in the pathway cofactor biosynthesis; ubiquinone biosynthesis. Its function is as follows. Removes the pyruvyl group from chorismate, with concomitant aromatization of the ring, to provide 4-hydroxybenzoate (4HB) for the ubiquinone pathway. This chain is Probable chorismate pyruvate-lyase, found in Thiobacillus denitrificans (strain ATCC 25259 / T1).